Here is a 74-residue protein sequence, read N- to C-terminus: ATP synthase subunit c (74 aa).

Transmembrane regions (helical) follow at residues 8–28 and 52–72; these read FIGV…VSNI and IGAG…MLLI.

The protein belongs to the ATPase C chain family. As to quaternary structure, F-type ATPases have 2 components, F(1) - the catalytic core - and F(0) - the membrane proton channel. F(1) has five subunits: alpha(3), beta(3), gamma(1), delta(1), epsilon(1). F(0) has three main subunits: a(1), b(2) and c(10-14). The alpha and beta chains form an alternating ring which encloses part of the gamma chain. F(1) is attached to F(0) by a central stalk formed by the gamma and epsilon chains, while a peripheral stalk is formed by the delta and b chains.

The protein localises to the cell inner membrane. F(1)F(0) ATP synthase produces ATP from ADP in the presence of a proton or sodium gradient. F-type ATPases consist of two structural domains, F(1) containing the extramembraneous catalytic core and F(0) containing the membrane proton channel, linked together by a central stalk and a peripheral stalk. During catalysis, ATP synthesis in the catalytic domain of F(1) is coupled via a rotary mechanism of the central stalk subunits to proton translocation. Its function is as follows. Key component of the F(0) channel; it plays a direct role in translocation across the membrane. A homomeric c-ring of between 10-14 subunits forms the central stalk rotor element with the F(1) delta and epsilon subunits. The sequence is that of ATP synthase subunit c from Rickettsia bellii (strain RML369-C).